The sequence spans 352 residues: UDP-N-acetylglucosamine--N-acetylmuramyl-(pentapeptide) pyrophosphoryl-undecaprenol N-acetylglucosamine transferase (352 aa).

Residues serine 195 and glutamine 287 each coordinate UDP-N-acetyl-alpha-D-glucosamine.

Belongs to the glycosyltransferase 28 family. MurG subfamily.

The protein resides in the cell membrane. It carries out the reaction Mur2Ac(oyl-L-Ala-gamma-D-Glu-L-Lys-D-Ala-D-Ala)-di-trans,octa-cis-undecaprenyl diphosphate + UDP-N-acetyl-alpha-D-glucosamine = beta-D-GlcNAc-(1-&gt;4)-Mur2Ac(oyl-L-Ala-gamma-D-Glu-L-Lys-D-Ala-D-Ala)-di-trans,octa-cis-undecaprenyl diphosphate + UDP + H(+). It functions in the pathway cell wall biogenesis; peptidoglycan biosynthesis. Its function is as follows. Cell wall formation. Catalyzes the transfer of a GlcNAc subunit on undecaprenyl-pyrophosphoryl-MurNAc-pentapeptide (lipid intermediate I) to form undecaprenyl-pyrophosphoryl-MurNAc-(pentapeptide)GlcNAc (lipid intermediate II). In Streptococcus pneumoniae serotype 4 (strain ATCC BAA-334 / TIGR4), this protein is UDP-N-acetylglucosamine--N-acetylmuramyl-(pentapeptide) pyrophosphoryl-undecaprenol N-acetylglucosamine transferase.